The following is a 406-amino-acid chain: Flavohemoprotein (406 aa).

Residues Val6 to Lys144 enclose the Globin domain. His91 provides a ligand contact to heme b. Residues Tyr101 and Glu143 each act as charge relay system in the active site. The tract at residues Gly155–Lys406 is reductase. An FAD-binding FR-type domain is found at Thr158 to Asp267. Residues Tyr196 and Arg212–Ser215 contribute to the FAD site. An NADP(+)-binding site is contributed by Gly280–Pro285. Leu397–Pro400 serves as a coordination point for FAD.

It belongs to the globin family. Two-domain flavohemoproteins subfamily. In the C-terminal section; belongs to the flavoprotein pyridine nucleotide cytochrome reductase family. It depends on heme b as a cofactor. Requires FAD as cofactor.

It carries out the reaction 2 nitric oxide + NADPH + 2 O2 = 2 nitrate + NADP(+) + H(+). The catalysed reaction is 2 nitric oxide + NADH + 2 O2 = 2 nitrate + NAD(+) + H(+). In terms of biological role, is involved in NO detoxification in an aerobic process, termed nitric oxide dioxygenase (NOD) reaction that utilizes O(2) and NAD(P)H to convert NO to nitrate, which protects the bacterium from various noxious nitrogen compounds. Therefore, plays a central role in the inducible response to nitrosative stress. The polypeptide is Flavohemoprotein (Oceanobacillus iheyensis (strain DSM 14371 / CIP 107618 / JCM 11309 / KCTC 3954 / HTE831)).